A 213-amino-acid chain; its full sequence is Reticulon-3 (213 aa).

Residues 1 to 16 (MADTSGPQSSHISSSA) are compositionally biased toward polar residues. The disordered stretch occupies residues 1 to 20 (MADTSGPQSSHISSSAGEKG). A Reticulon domain is found at 25 to 213 (VQDLLYWRDV…LPGALKKKSE (189 aa)). Transmembrane regions (helical) follow at residues 45 to 65 (MVLL…YLVL) and 154 to 174 (VFNG…APIV).

In terms of assembly, homodimer.

It is found in the endoplasmic reticulum membrane. The protein localises to the golgi apparatus membrane. Its function is as follows. May be involved in membrane trafficking in the early secretory pathway. The sequence is that of Reticulon-3 (rtn3) from Xenopus tropicalis (Western clawed frog).